A 441-amino-acid polypeptide reads, in one-letter code: 3-phosphoshikimate 1-carboxyvinyltransferase (441 aa).

The interval 1–24 is disordered; it reads MSGTGQSDDPRELKAGGSLQGRVK. The 3-phosphoshikimate site is built by Lys-29, Ser-30, and Arg-34. Position 29 (Lys-29) interacts with phosphoenolpyruvate. Gly-103 and Arg-132 together coordinate phosphoenolpyruvate. Residues Ser-177, Gln-179, Asp-328, and Lys-355 each coordinate 3-phosphoshikimate. Gln-179 is a binding site for phosphoenolpyruvate. The active-site Proton acceptor is Asp-328. Phosphoenolpyruvate is bound by residues Arg-359 and Arg-401.

Belongs to the EPSP synthase family. In terms of assembly, monomer.

Its subcellular location is the cytoplasm. The enzyme catalyses 3-phosphoshikimate + phosphoenolpyruvate = 5-O-(1-carboxyvinyl)-3-phosphoshikimate + phosphate. It participates in metabolic intermediate biosynthesis; chorismate biosynthesis; chorismate from D-erythrose 4-phosphate and phosphoenolpyruvate: step 6/7. Functionally, catalyzes the transfer of the enolpyruvyl moiety of phosphoenolpyruvate (PEP) to the 5-hydroxyl of shikimate-3-phosphate (S3P) to produce enolpyruvyl shikimate-3-phosphate and inorganic phosphate. This chain is 3-phosphoshikimate 1-carboxyvinyltransferase, found in Synechococcus sp. (strain CC9605).